We begin with the raw amino-acid sequence, 185 residues long: Lysine-rich arabinogalactan protein 17 (185 aa).

The signal sequence occupies residues 1-21 (MTRNILLTVTLICIVFITVGG). The tract at residues 25–160 (ATAPIHSPST…FSPAADDQSG (136 aa)) is disordered. Residues 43-68 (SPAISPAAPTPESTEAPAKTPVEAPV) are compositionally biased toward low complexity. A compositionally biased stretch (pro residues) spans 69-88 (EAPPSPTPASTPQISPPAPS). Residues 111 to 122 (TKHKKKTKKHKT) show a composition bias toward basic residues. Pro residues predominate over residues 135–146 (PPAPPGEAPGPG). The GPI-anchor amidated serine moiety is linked to residue S159. A propeptide spans 160 to 185 (GAQRISVVIQMVGAAAIAWSLLVLAF) (removed in mature form).

It belongs to the lysine-rich AGP family. O-glycosylated on the hydroxyproline residues. In terms of tissue distribution, predominantly expressed in open flowers. Also expressed in leaves and stems, and at a lower level in roots.

The protein localises to the cell membrane. Proteoglycan that seems to be implicated in diverse developmental roles such as differentiation, cell-cell recognition, embryogenesis and programmed cell death. This is Lysine-rich arabinogalactan protein 17 (AGP17) from Arabidopsis thaliana (Mouse-ear cress).